We begin with the raw amino-acid sequence, 123 residues long: Large ribosomal subunit protein uL29 (123 aa).

Residue K19 is modified to N6-acetyllysine. K25 is covalently cross-linked (Glycyl lysine isopeptide (Lys-Gly) (interchain with G-Cter in SUMO2)). S29 bears the Phosphoserine mark. K43 carries the N6-acetyllysine modification.

This sequence belongs to the universal ribosomal protein uL29 family. In terms of assembly, component of the large ribosomal subunit.

The protein localises to the cytoplasm. Component of the large ribosomal subunit. The ribosome is a large ribonucleoprotein complex responsible for the synthesis of proteins in the cell. This chain is Large ribosomal subunit protein uL29 (RPL35), found in Sus scrofa (Pig).